Here is a 383-residue protein sequence, read N- to C-terminus: S-adenosylmethionine synthase (383 aa).

H15 contributes to the ATP binding site. D17 contributes to the Mg(2+) binding site. E43 is a K(+) binding site. Residues E56 and Q99 each coordinate L-methionine. Residues 99–109 form a flexible loop region; that stretch reads QSPDINQGVDR. ATP-binding positions include 164–166, 230–231, D239, 245–246, A262, and K266; these read DAK, RF, and RK. Residue D239 coordinates L-methionine. K270 provides a ligand contact to L-methionine.

This sequence belongs to the AdoMet synthase family. As to quaternary structure, homotetramer; dimer of dimers. Mg(2+) is required as a cofactor. K(+) serves as cofactor.

The protein resides in the cytoplasm. The catalysed reaction is L-methionine + ATP + H2O = S-adenosyl-L-methionine + phosphate + diphosphate. The protein operates within amino-acid biosynthesis; S-adenosyl-L-methionine biosynthesis; S-adenosyl-L-methionine from L-methionine: step 1/1. Catalyzes the formation of S-adenosylmethionine (AdoMet) from methionine and ATP. The overall synthetic reaction is composed of two sequential steps, AdoMet formation and the subsequent tripolyphosphate hydrolysis which occurs prior to release of AdoMet from the enzyme. This is S-adenosylmethionine synthase from Shewanella sp. (strain ANA-3).